A 207-amino-acid polypeptide reads, in one-letter code: Protein LURP1 (207 aa).

The protein belongs to the LOR family. Limited to discrete pathogen infection sites in leaves.

Involved in basal defense against virulent oomycetes. Might be related to the phospholipid scramblase and tubby-like superfamily of membrane tethered transcription factors. This is Protein LURP1 (LURP1) from Arabidopsis thaliana (Mouse-ear cress).